A 113-amino-acid chain; its full sequence is U11-theraphotoxin-Hhn1h (113 aa).

An N-terminal signal peptide occupies residues 1–21 (MNTVRVTFLLVFVLVVSLGQA). Residues 22-74 (DKDENRMEMQEKTEQGKSYLDFAENLLLQKLEELEAKLLEEDSEESRNSRQKR) constitute a propeptide that is removed on maturation. The interval 61-83 (EEDSEESRNSRQKRRIGEGVPCD) is disordered. 2 disulfide bridges follow: cysteine 82-cysteine 95 and cysteine 89-cysteine 110.

Belongs to the neurotoxin 14 (magi-1) family. 01 (HNTX-16) subfamily. As to expression, expressed by the venom gland.

Its subcellular location is the secreted. In terms of biological role, probable ion channel inhibitor. The chain is U11-theraphotoxin-Hhn1h from Cyriopagopus hainanus (Chinese bird spider).